The following is a 278-amino-acid chain: Protein irg-2 (278 aa).

The tract at residues 152 to 179 (NSIRGQPFKSLQPENRTPTQVTGHQQES) is disordered. Over residues 163-179 (QPENRTPTQVTGHQQES) the composition is skewed to polar residues.

Its function is as follows. Plays a role in innate immunity by conferring resistance to virulent strains of the Gram-negative bacterium P.aeruginosa via the zip-2 pathway and independent of the pmk-1 p38MAPK pathway. Induced as part of several immune responses to translational inhibition arising from endocytosis of ToxA during P.aeruginosa infection or exposure to exogenous cycloheximide. This Caenorhabditis elegans protein is Protein irg-2.